Consider the following 321-residue polypeptide: Prephenate dehydratase (321 aa).

The Prephenate dehydratase domain occupies 3–189 (RIAYLGPEGT…ARTRFVLVGR (187 aa)). Residues 203-280 (SAVLRIDNQP…ADVRYLGSWP (78 aa)) enclose the ACT domain.

Homodimer.

It catalyses the reaction prephenate + H(+) = 3-phenylpyruvate + CO2 + H2O. It participates in amino-acid biosynthesis; L-phenylalanine biosynthesis; phenylpyruvate from prephenate: step 1/1. The sequence is that of Prephenate dehydratase (pheA) from Mycobacterium bovis (strain ATCC BAA-935 / AF2122/97).